Consider the following 444-residue polypeptide: Tubulin beta chain (444 aa).

Positions 11, 68, 137, 141, 142, 143, 203, and 225 each coordinate GTP. Glutamate 68 serves as a coordination point for Mg(2+). The segment at 424–444 (QDATAEEEGEFDEDEEMDEMM) is disordered. Over residues 427–444 (TAEEEGEFDEDEEMDEMM) the composition is skewed to acidic residues.

This sequence belongs to the tubulin family. Dimer of alpha and beta chains. A typical microtubule is a hollow water-filled tube with an outer diameter of 25 nm and an inner diameter of 15 nM. Alpha-beta heterodimers associate head-to-tail to form protofilaments running lengthwise along the microtubule wall with the beta-tubulin subunit facing the microtubule plus end conferring a structural polarity. Microtubules usually have 13 protofilaments but different protofilament numbers can be found in some organisms and specialized cells. Mg(2+) is required as a cofactor.

The protein resides in the cytoplasm. It localises to the cytoskeleton. Tubulin is the major constituent of microtubules, a cylinder consisting of laterally associated linear protofilaments composed of alpha- and beta-tubulin heterodimers. Microtubules grow by the addition of GTP-tubulin dimers to the microtubule end, where a stabilizing cap forms. Below the cap, tubulin dimers are in GDP-bound state, owing to GTPase activity of alpha-tubulin. This is Tubulin beta chain from Achlya klebsiana.